A 143-amino-acid polypeptide reads, in one-letter code: Large ribosomal subunit protein uL11 (143 aa).

This sequence belongs to the universal ribosomal protein uL11 family. Part of the ribosomal stalk of the 50S ribosomal subunit. Interacts with L10 and the large rRNA to form the base of the stalk. L10 forms an elongated spine to which L12 dimers bind in a sequential fashion forming a multimeric L10(L12)X complex. In terms of processing, one or more lysine residues are methylated.

Its function is as follows. Forms part of the ribosomal stalk which helps the ribosome interact with GTP-bound translation factors. The protein is Large ribosomal subunit protein uL11 of Salinispora tropica (strain ATCC BAA-916 / DSM 44818 / JCM 13857 / NBRC 105044 / CNB-440).